The sequence spans 160 residues: Adenosine 5'-monophosphoramidase HINT3 (160 aa).

In terms of domain architecture, HIT spans 24–132 (IFCTIAKGDD…LAPYSQLYKW (109 aa)). AMP is bound by residues 50 to 51 (DI) and 119 to 121 (HLH). The Histidine triad motif motif lies at 117–121 (HLHLH). Residue H119 is the Tele-AMP-histidine intermediate of the active site.

This sequence belongs to the HINT family. In terms of assembly, forms dimers to octamers and even larger oligomer.

It localises to the cytoplasm. The protein localises to the nucleus. The enzyme catalyses adenosine 5'-phosphoramidate + H2O = AMP + NH4(+). Exhibits adenosine 5'-monophosphoramidase activity, hydrolyzing purine nucleotide phosphoramidates with a single phosphate group such as adenosine 5'monophosphoramidate (AMP-NH2) to yield AMP and NH2. Hydrolyzes lysyl-AMP (AMP-N-epsilon-(N-alpha-acetyl lysine methyl ester)) generated by lysine tRNA ligase. This Danio rerio (Zebrafish) protein is Adenosine 5'-monophosphoramidase HINT3 (hint3).